The chain runs to 117 residues: UPF0102 protein Spro_4337 (117 aa).

Belongs to the UPF0102 family.

In Serratia proteamaculans (strain 568), this protein is UPF0102 protein Spro_4337.